The primary structure comprises 87 residues: MSSTFEQAAADVKELKETPNSDELLKLYALFKQATVGDNNTEKPGLLDLKGKFKWNAWEELKGKSKEDAASEYISFVDELKTKYGMK.

One can recognise an ACB domain in the interval 1-86; the sequence is MSSTFEQAAA…VDELKTKYGM (86 aa). An acyl-CoA contacts are provided by residues Lys-13, 28 to 32, Lys-50, Lys-54, and Tyr-73; that span reads YALFK.

Belongs to the ACBP family.

Its subcellular location is the cytoplasm. The protein localises to the nucleus. In terms of biological role, binds medium- and long-chain acyl-CoA esters with very high affinity and may function as an intracellular carrier of acyl-CoA esters. May enhance the activity of the ceramide synthase complex. This Schizosaccharomyces pombe (strain 972 / ATCC 24843) (Fission yeast) protein is Putative acyl-CoA-binding protein.